A 233-amino-acid polypeptide reads, in one-letter code: Large ribosomal subunit protein uL1 (233 aa).

The protein belongs to the universal ribosomal protein uL1 family. As to quaternary structure, part of the 50S ribosomal subunit.

In terms of biological role, binds directly to 23S rRNA. The L1 stalk is quite mobile in the ribosome, and is involved in E site tRNA release. Protein L1 is also a translational repressor protein, it controls the translation of the L11 operon by binding to its mRNA. The polypeptide is Large ribosomal subunit protein uL1 (Aeromonas hydrophila subsp. hydrophila (strain ATCC 7966 / DSM 30187 / BCRC 13018 / CCUG 14551 / JCM 1027 / KCTC 2358 / NCIMB 9240 / NCTC 8049)).